We begin with the raw amino-acid sequence, 452 residues long: Phosphoglucosamine mutase (452 aa).

Ser-108 acts as the Phosphoserine intermediate in catalysis. Mg(2+)-binding residues include Ser-108, Asp-247, Asp-249, and Asp-251. Position 108 is a phosphoserine (Ser-108).

The protein belongs to the phosphohexose mutase family. Requires Mg(2+) as cofactor. Post-translationally, activated by phosphorylation.

The catalysed reaction is alpha-D-glucosamine 1-phosphate = D-glucosamine 6-phosphate. In terms of biological role, catalyzes the conversion of glucosamine-6-phosphate to glucosamine-1-phosphate. This Paraburkholderia phytofirmans (strain DSM 17436 / LMG 22146 / PsJN) (Burkholderia phytofirmans) protein is Phosphoglucosamine mutase.